The sequence spans 538 residues: Chaperonin GroEL 1 (538 aa).

ATP-binding positions include 29 to 32 (TLGP), 86 to 90 (DGTTT), Gly-413, 478 to 480 (NAA), and Asp-494.

Belongs to the chaperonin (HSP60) family. In terms of assembly, forms a cylinder of 14 subunits composed of two heptameric rings stacked back-to-back. Interacts with the co-chaperonin GroES.

The protein resides in the cytoplasm. It carries out the reaction ATP + H2O + a folded polypeptide = ADP + phosphate + an unfolded polypeptide.. Functionally, together with its co-chaperonin GroES, plays an essential role in assisting protein folding. The GroEL-GroES system forms a nano-cage that allows encapsulation of the non-native substrate proteins and provides a physical environment optimized to promote and accelerate protein folding. The polypeptide is Chaperonin GroEL 1 (Corynebacterium glutamicum (strain ATCC 13032 / DSM 20300 / JCM 1318 / BCRC 11384 / CCUG 27702 / LMG 3730 / NBRC 12168 / NCIMB 10025 / NRRL B-2784 / 534)).